We begin with the raw amino-acid sequence, 371 residues long: Queuine tRNA-ribosyltransferase (371 aa).

D90 acts as the Proton acceptor in catalysis. Substrate contacts are provided by residues 90 to 94, D144, Q189, and G215; that span reads DSGGF. The interval 246 to 252 is RNA binding; it reads GVGTPEN. D265 functions as the Nucleophile in the catalytic mechanism. The segment at 270-274 is RNA binding; important for wobble base 34 recognition; it reads TRNAR. Zn(2+)-binding residues include C303, C305, C308, and H334.

The protein belongs to the queuine tRNA-ribosyltransferase family. Homodimer. Within each dimer, one monomer is responsible for RNA recognition and catalysis, while the other monomer binds to the replacement base PreQ1. It depends on Zn(2+) as a cofactor.

The catalysed reaction is 7-aminomethyl-7-carbaguanine + guanosine(34) in tRNA = 7-aminomethyl-7-carbaguanosine(34) in tRNA + guanine. The protein operates within tRNA modification; tRNA-queuosine biosynthesis. Functionally, catalyzes the base-exchange of a guanine (G) residue with the queuine precursor 7-aminomethyl-7-deazaguanine (PreQ1) at position 34 (anticodon wobble position) in tRNAs with GU(N) anticodons (tRNA-Asp, -Asn, -His and -Tyr). Catalysis occurs through a double-displacement mechanism. The nucleophile active site attacks the C1' of nucleotide 34 to detach the guanine base from the RNA, forming a covalent enzyme-RNA intermediate. The proton acceptor active site deprotonates the incoming PreQ1, allowing a nucleophilic attack on the C1' of the ribose to form the product. After dissociation, two additional enzymatic reactions on the tRNA convert PreQ1 to queuine (Q), resulting in the hypermodified nucleoside queuosine (7-(((4,5-cis-dihydroxy-2-cyclopenten-1-yl)amino)methyl)-7-deazaguanosine). This is Queuine tRNA-ribosyltransferase from Helicobacter pylori (strain HPAG1).